Reading from the N-terminus, the 492-residue chain is uncharacterized protein (492 aa).

This sequence belongs to the FGGY kinase family.

This is an uncharacterized protein from Archaeoglobus fulgidus (strain ATCC 49558 / DSM 4304 / JCM 9628 / NBRC 100126 / VC-16).